Consider the following 583-residue polypeptide: Phosphoglucomutase, cytoplasmic (583 aa).

A disordered region spans residues Met-1 to Gly-20. Alpha-D-glucose 1,6-bisphosphate is bound by residues Arg-25 and Ser-124. The active-site Phosphoserine intermediate is the Ser-124. Positions 124, 300, 302, and 304 each coordinate Mg(2+). Residue Ser-124 is modified to Phosphoserine. Alpha-D-glucose 1,6-bisphosphate is bound by residues Asp-304, Arg-305, Thr-368, Glu-387, Ser-389, and Lys-400.

This sequence belongs to the phosphohexose mutase family. Monomer. Requires Mg(2+) as cofactor.

Its subcellular location is the cytoplasm. The catalysed reaction is alpha-D-glucose 1-phosphate = alpha-D-glucose 6-phosphate. It carries out the reaction O-phospho-L-seryl-[protein] + alpha-D-glucose 1-phosphate = alpha-D-glucose 1,6-bisphosphate + L-seryl-[protein]. It catalyses the reaction alpha-D-glucose 1,6-bisphosphate + L-seryl-[protein] = O-phospho-L-seryl-[protein] + alpha-D-glucose 6-phosphate. In terms of biological role, catalyzes the reversible isomerization of alpha-D-glucose 1-phosphate to alpha-D-glucose 6-phosphate. The mechanism proceeds via the intermediate compound alpha-D-glucose 1,6-bisphosphate. This enzyme participates in both the breakdown and synthesis of glucose. The chain is Phosphoglucomutase, cytoplasmic (PGM1) from Mesembryanthemum crystallinum (Common ice plant).